The following is a 134-amino-acid chain: Putative pre-16S rRNA nuclease (134 aa).

It belongs to the YqgF nuclease family.

Its subcellular location is the cytoplasm. In terms of biological role, could be a nuclease involved in processing of the 5'-end of pre-16S rRNA. The polypeptide is Putative pre-16S rRNA nuclease (Helicobacter pylori (strain ATCC 700392 / 26695) (Campylobacter pylori)).